The primary structure comprises 350 residues: MAEKMQAIMKTKPAYGAELVEVDVPKPGPGEVLIKVLATSICGTDLHIYEWNEWAQSRIKPPQIMGHEVAGEVVEVGPGVEDLQVGDYISVETHIVCGKCYACKHNRYHVCQNTKIFGVDMDGVFAHYAIVPAKNAWKNPKDMPPEYAALQEPLGNAVDTVLAGPIAGRSTLITGAGPLGLLGIAVAKASGAYPVIVSEPSEFRRKLAKKVGADYVVNPFEEDPVKFVMDITDGAGVEVFLEFSGAPKALEQGLKAVTPGGRVSLLGLFPREVTIDFNNLIIFKALEVHGITGRHLWETWYTVSSLIQSGKLNLDPIITHKYKGFDKFEEAFELMRAGKTGKVVFFPHKG.

C42 serves as a coordination point for Zn(2+). Catalysis depends on charge relay system residues T44 and H47. The Zn(2+) site is built by H67, E68, C97, C100, C103, and C111. Residues L179, E199, R204, 266–268, and 291–292 each bind NAD(+); these read LGL and IT.

This sequence belongs to the zinc-containing alcohol dehydrogenase family. Homotetramer. Requires Zn(2+) as cofactor.

It is found in the cytoplasm. It catalyses the reaction L-threonine + NAD(+) = (2S)-2-amino-3-oxobutanoate + NADH + H(+). It participates in amino-acid degradation; L-threonine degradation via oxydo-reductase pathway; glycine from L-threonine: step 1/2. Catalyzes the NAD(+)-dependent oxidation of L-threonine to 2-amino-3-ketobutyrate. To a lesser extent, also catalyzes the oxidation of L-serine. This is L-threonine 3-dehydrogenase from Thermococcus kodakarensis (strain ATCC BAA-918 / JCM 12380 / KOD1) (Pyrococcus kodakaraensis (strain KOD1)).